We begin with the raw amino-acid sequence, 641 residues long: MNIRSNPDTTRPAVTTGGLPSSKKIYATPAAAPDLRVPLREIILSEGAGEPNLPIYDTSGPYTDPSVTIDVNAGLSRARTQWVKERGGVEEYQGRDVKPEDNGNVGAAHAAKSFTAYHKPLRGIGDAPITQYEFARRGIITKEMIYVAERENLGRKQQLERAEAALADGESFGASVPAFITPEFVRDEIARGRAIIPANINHGELEPMIIGRNFLTKINANIGNSAVTSSVEEEVDKMVWAIRWGADTVMDLSTGRNIHTTREWILRNSPVPIGTVPIYQALEKCEGDPVKLTWELYKDTLIEQCEQGVDYFTIHAGVRLQYIHLTANRVTGIVSRGGSIMAKWCLAHHKESFLYTHFDEICDLMRKYDVSFSLGDGLRPGSIADANDRAQFAELETLGELTKIAWAKGCQVMIEGPGHVPMHKIKINMDKQLKECGEAPFYTLGPLTTDIAPGYDHITSGIGAAMIGWFGCAMLCYVTPKEHLGLPDRNDVKVGVITYKIAAHAADLAKGHPAAQLRDDAVSRARFDFRWQDQFNLGLDPDTAQAFHDETLPKDAHKVAHFCSMCGPKFCSMKITQDVRDYAAGLGDNEKAALYPAGSVGMSISGVIEDGMAQMSAKFRDMGEHLYLDAEKVKESNKALS.

Polar residues predominate over residues 1 to 13 (MNIRSNPDTTRPA). Residues 1–21 (MNIRSNPDTTRPAVTTGGLPS) form a disordered region. Substrate contacts are provided by residues Asn-221, Met-250, Tyr-279, His-315, 335–337 (SRG), 376–379 (DGLR), and Glu-415. His-419 contacts Zn(2+). Residue Tyr-442 participates in substrate binding. His-483 provides a ligand contact to Zn(2+). [4Fe-4S] cluster is bound by residues Cys-563, Cys-566, and Cys-571.

Belongs to the ThiC family. In terms of assembly, homodimer. It depends on [4Fe-4S] cluster as a cofactor.

It carries out the reaction 5-amino-1-(5-phospho-beta-D-ribosyl)imidazole + S-adenosyl-L-methionine = 4-amino-2-methyl-5-(phosphooxymethyl)pyrimidine + CO + 5'-deoxyadenosine + formate + L-methionine + 3 H(+). It participates in cofactor biosynthesis; thiamine diphosphate biosynthesis. Its function is as follows. Catalyzes the synthesis of the hydroxymethylpyrimidine phosphate (HMP-P) moiety of thiamine from aminoimidazole ribotide (AIR) in a radical S-adenosyl-L-methionine (SAM)-dependent reaction. In Rhodopseudomonas palustris (strain BisB5), this protein is Phosphomethylpyrimidine synthase.